Reading from the N-terminus, the 490-residue chain is Acetyl-coenzyme A carboxylase carboxyl transferase subunit beta, chloroplastic (490 aa).

The 263-residue stretch at 228-490 (LWVQCENCYG…FKLHAFFPLN (263 aa)) folds into the CoA carboxyltransferase N-terminal domain. 4 residues coordinate Zn(2+): C232, C235, C251, and C254. The C4-type zinc-finger motif lies at 232–254 (CENCYGLNYKKLLKSKMNICDQC).

Belongs to the AccD/PCCB family. In terms of assembly, acetyl-CoA carboxylase is a heterohexamer composed of biotin carboxyl carrier protein, biotin carboxylase and 2 subunits each of ACCase subunit alpha and ACCase plastid-coded subunit beta (accD). Requires Zn(2+) as cofactor.

The protein localises to the plastid. It is found in the chloroplast stroma. It carries out the reaction N(6)-carboxybiotinyl-L-lysyl-[protein] + acetyl-CoA = N(6)-biotinyl-L-lysyl-[protein] + malonyl-CoA. It participates in lipid metabolism; malonyl-CoA biosynthesis; malonyl-CoA from acetyl-CoA: step 1/1. Component of the acetyl coenzyme A carboxylase (ACC) complex. Biotin carboxylase (BC) catalyzes the carboxylation of biotin on its carrier protein (BCCP) and then the CO(2) group is transferred by the transcarboxylase to acetyl-CoA to form malonyl-CoA. This chain is Acetyl-coenzyme A carboxylase carboxyl transferase subunit beta, chloroplastic, found in Eucalyptus globulus subsp. globulus (Tasmanian blue gum).